Reading from the N-terminus, the 429-residue chain is Chaperone SurA (429 aa).

Residues 1 to 18 (MFKRIALVCALFSGICFA) form the signal peptide. 2 PpiC domains span residues 170-271 (NLTY…KLVA) and 281-380 (ITQT…EVIA).

The protein localises to the periplasm. It carries out the reaction [protein]-peptidylproline (omega=180) = [protein]-peptidylproline (omega=0). Chaperone involved in the correct folding and assembly of outer membrane proteins. Recognizes specific patterns of aromatic residues and the orientation of their side chains, which are found more frequently in integral outer membrane proteins. May act in both early periplasmic and late outer membrane-associated steps of protein maturation. The polypeptide is Chaperone SurA (Legionella pneumophila (strain Paris)).